Reading from the N-terminus, the 96-residue chain is uncharacterized protein (96 aa).

This is an uncharacterized protein from Enterobacteria phage T4 (Bacteriophage T4).